A 68-amino-acid polypeptide reads, in one-letter code: ATP synthase F(0) complex subunit 8 (68 aa).

Residues 8–24 (VWPTIITSMLLTLFLLM) form a helical membrane-spanning segment. At lysine 54 the chain carries N6-acetyllysine; alternate. N6-succinyllysine; alternate is present on lysine 54. Residue lysine 57 is modified to N6-acetyllysine.

This sequence belongs to the ATPase protein 8 family. Component of the ATP synthase complex composed at least of ATP5F1A/subunit alpha, ATP5F1B/subunit beta, ATP5MC1/subunit c (homooctomer), MT-ATP6/subunit a, MT-ATP8/subunit 8, ATP5ME/subunit e, ATP5MF/subunit f, ATP5MG/subunit g, ATP5MK/subunit k, ATP5MJ/subunit j, ATP5F1C/subunit gamma, ATP5F1D/subunit delta, ATP5F1E/subunit epsilon, ATP5PF/subunit F6, ATP5PB/subunit b, ATP5PD/subunit d, ATP5PO/subunit OSCP. ATP synthase complex consists of a soluble F(1) head domain (subunits alpha(3) and beta(3)) - the catalytic core - and a membrane F(0) domain - the membrane proton channel (subunits c, a, 8, e, f, g, k and j). These two domains are linked by a central stalk (subunits gamma, delta, and epsilon) rotating inside the F1 region and a stationary peripheral stalk (subunits F6, b, d, and OSCP). Interacts with PRICKLE3.

It is found in the mitochondrion membrane. Functionally, subunit 8, of the mitochondrial membrane ATP synthase complex (F(1)F(0) ATP synthase or Complex V) that produces ATP from ADP in the presence of a proton gradient across the membrane which is generated by electron transport complexes of the respiratory chain. ATP synthase complex consist of a soluble F(1) head domain - the catalytic core - and a membrane F(1) domain - the membrane proton channel. These two domains are linked by a central stalk rotating inside the F(1) region and a stationary peripheral stalk. During catalysis, ATP synthesis in the catalytic domain of F(1) is coupled via a rotary mechanism of the central stalk subunits to proton translocation. In vivo, can only synthesize ATP although its ATP hydrolase activity can be activated artificially in vitro. Part of the complex F(0) domain. In Symphalangus syndactylus (Siamang), this protein is ATP synthase F(0) complex subunit 8.